The chain runs to 98 residues: NADH-ubiquinone oxidoreductase chain 4L (98 aa).

The next 3 helical transmembrane spans lie at 2–22 (PSIF…TLVF), 29–49 (SLLC…LIIL), and 61–81 (ILLL…LVMV).

Belongs to the complex I subunit 4L family. In terms of assembly, core subunit of respiratory chain NADH dehydrogenase (Complex I) which is composed of 45 different subunits.

Its subcellular location is the mitochondrion inner membrane. The enzyme catalyses a ubiquinone + NADH + 5 H(+)(in) = a ubiquinol + NAD(+) + 4 H(+)(out). In terms of biological role, core subunit of the mitochondrial membrane respiratory chain NADH dehydrogenase (Complex I) which catalyzes electron transfer from NADH through the respiratory chain, using ubiquinone as an electron acceptor. Part of the enzyme membrane arm which is embedded in the lipid bilayer and involved in proton translocation. The sequence is that of NADH-ubiquinone oxidoreductase chain 4L (MT-ND4L) from Propithecus diadema diadema (Diademed sifaka).